A 256-amino-acid polypeptide reads, in one-letter code: Tryptophan synthase alpha chain (256 aa).

Active-site proton acceptor residues include glutamate 46 and aspartate 57.

The protein belongs to the TrpA family. As to quaternary structure, tetramer of two alpha and two beta chains.

It carries out the reaction (1S,2R)-1-C-(indol-3-yl)glycerol 3-phosphate + L-serine = D-glyceraldehyde 3-phosphate + L-tryptophan + H2O. The protein operates within amino-acid biosynthesis; L-tryptophan biosynthesis; L-tryptophan from chorismate: step 5/5. In terms of biological role, the alpha subunit is responsible for the aldol cleavage of indoleglycerol phosphate to indole and glyceraldehyde 3-phosphate. The polypeptide is Tryptophan synthase alpha chain (Bacteroides thetaiotaomicron (strain ATCC 29148 / DSM 2079 / JCM 5827 / CCUG 10774 / NCTC 10582 / VPI-5482 / E50)).